We begin with the raw amino-acid sequence, 164 residues long: Ecotin (164 aa).

The signal sequence occupies residues M1–A20. Cysteines 72 and 109 form a disulfide.

This sequence belongs to the protease inhibitor I11 (ecotin) family. As to quaternary structure, homodimer.

It is found in the periplasm. General inhibitor of pancreatic serine proteases: inhibits chymotrypsin, trypsin, elastases, factor X, kallikrein as well as a variety of other proteases. This chain is Ecotin, found in Salmonella paratyphi A (strain ATCC 9150 / SARB42).